The primary structure comprises 773 residues: Transducin-like enhancer protein 4 (773 aa).

Disordered stretches follow at residues 1–22 (MIRD…QPAQ), 140–162 (HGHG…AIPP), and 182–357 (LPIK…DPLA). A q domain region spans residues 1–136 (MIRDLSKMYP…AIIGQQLQAQ (136 aa)). The tract at residues 137-204 (HLSHGHGLPV…HQRDRDSIKS (68 aa)) is GP domain. Positions 183–202 (PIKDEKKHHDNDHQRDRDSI) are enriched in basic and acidic residues. The segment covering 203–214 (KSSSVSPSASFR) has biased composition (low complexity). The interval 205-274 (SSVSPSASFR…SPRGSPAHSP (70 aa)) is ccN domain. S208, S212, S216, and S222 each carry phosphoserine. Basic and acidic residues predominate over residues 215–252 (GSEKHRNSTDYSSESKKQKTEEKEIAARYDSDGEKSDD). N6-acetyllysine is present on K237. Phosphoserine is present on S245. Phosphoserine; by CK2 is present on S250. S265 is subject to Phosphoserine; by CDK1. A phosphoserine mark is found at S269 and S273. The span at 273–289 (SPRENGLDKTRLLKKDA) shows a compositional bias: basic and acidic residues. The segment at 275–452 (RENGLDKTRL…PGGKPAYSFH (178 aa)) is SP domain. N6-acetyllysine is present on K281. The span at 290–305 (PISPASVASSSSTPSS) shows a compositional bias: low complexity. A Phosphoserine modification is found at S292. Positions 317–328 (TTPVSKSNTPTP) are enriched in polar residues. T318 carries the post-translational modification Phosphothreonine. Phosphoserine is present on residues S321 and S323. A phosphothreonine mark is found at T325, T327, T334, and T340. At S419 the chain carries Phosphoserine. WD repeat units lie at residues 485-523 (NHGE…NKSP), 531-570 (NRDN…PRIK), 575-614 (SSAP…LVRQ), 617-656 (GHTD…QLQQ), 658-697 (DFTS…KYQL), 699-738 (LHES…SIFQ), and 740-773 (KESS…EVIY).

Belongs to the WD repeat Groucho/TLE family. In terms of assembly, homooligomer and heterooligomer with other family members. Interacts with PAX5. Interacts with LEF1, TCF7, TCF7L1 and TCF7L2. Interacts with ZNF703; TLE4 may mediate ZNF703 transcriptional repression. Interacts with SIX3 and SIX6. Interacts with PAX2. Interacts with TLE1. In terms of processing, phosphorylated. PAX5 binding increases phosphorylation. Ubiquitinated by XIAP/BIRC4. As to expression, expressed in bone marrow-derived macrophages.

The protein localises to the nucleus. Functionally, transcriptional corepressor that binds to a number of transcription factors. Inhibits the transcriptional activation mediated by PAX5, and by CTNNB1 and TCF family members in Wnt signaling. The effects of full-length TLE family members may be modulated by association with dominant-negative AES. Essential for the transcriptional repressor activity of SIX3 during retina and lens development and for SIX3 transcriptional auto-repression. Involved in transcriptional repression of GNRHR and enhances MSX1-mediated transcriptional repression of CGA/alpha-GSU. This is Transducin-like enhancer protein 4 (Tle4) from Mus musculus (Mouse).